The chain runs to 398 residues: Acetate kinase (398 aa).

Asparagine 7 provides a ligand contact to Mg(2+). Lysine 14 is a binding site for ATP. Residue arginine 96 coordinates substrate. Residue aspartate 153 is the Proton donor/acceptor of the active site. ATP is bound by residues 210–214, 284–286, and 332–336; these read HLGNG, DLR, and GIGEH. Glutamate 385 is a Mg(2+) binding site.

This sequence belongs to the acetokinase family. As to quaternary structure, homodimer. The cofactor is Mg(2+). It depends on Mn(2+) as a cofactor.

It localises to the cytoplasm. It catalyses the reaction acetate + ATP = acetyl phosphate + ADP. Its pathway is metabolic intermediate biosynthesis; acetyl-CoA biosynthesis; acetyl-CoA from acetate: step 1/2. Its function is as follows. Catalyzes the formation of acetyl phosphate from acetate and ATP. Can also catalyze the reverse reaction. The polypeptide is Acetate kinase (Acaryochloris marina (strain MBIC 11017)).